An 862-amino-acid polypeptide reads, in one-letter code: Bifunctional uridylyltransferase/uridylyl-removing enzyme (862 aa).

The interval 1-328 is uridylyltransferase; sequence MSTAAIPTDA…FPRRAGAAIV (328 aa). The interval 329–685 is uridylyl-removing; the sequence is INERFQAVRE…ARVSDADQGV (357 aa). Residues 447–563 form the HD domain; it reads VDQHIMMVLR…GRFADTVGTE (117 aa). ACT domains are found at residues 686-765 and 794-862; these read QVMV…DRPS and ILSL…RLHI.

It belongs to the GlnD family. It depends on Mg(2+) as a cofactor.

It carries out the reaction [protein-PII]-L-tyrosine + UTP = [protein-PII]-uridylyl-L-tyrosine + diphosphate. The enzyme catalyses [protein-PII]-uridylyl-L-tyrosine + H2O = [protein-PII]-L-tyrosine + UMP + H(+). Its activity is regulated as follows. Uridylyltransferase (UTase) activity is inhibited by glutamine, while glutamine activates uridylyl-removing (UR) activity. Modifies, by uridylylation and deuridylylation, the PII regulatory proteins (GlnB and homologs), in response to the nitrogen status of the cell that GlnD senses through the glutamine level. Under low glutamine levels, catalyzes the conversion of the PII proteins and UTP to PII-UMP and PPi, while under higher glutamine levels, GlnD hydrolyzes PII-UMP to PII and UMP (deuridylylation). Thus, controls uridylylation state and activity of the PII proteins, and plays an important role in the regulation of nitrogen assimilation and metabolism. In Aromatoleum aromaticum (strain DSM 19018 / LMG 30748 / EbN1) (Azoarcus sp. (strain EbN1)), this protein is Bifunctional uridylyltransferase/uridylyl-removing enzyme.